The following is a 97-amino-acid chain: Large ribosomal subunit protein eL21 (97 aa).

The protein belongs to the eukaryotic ribosomal protein eL21 family.

The chain is Large ribosomal subunit protein eL21 from Methanoculleus marisnigri (strain ATCC 35101 / DSM 1498 / JR1).